A 70-amino-acid polypeptide reads, in one-letter code: MQADIQPNYGDMNATCSCGNVVKTRSTLAKDIHIDVCSECHPFYTGKQKTADTGGRIDRFNKRFGAIKSK.

Zn(2+) contacts are provided by Cys16, Cys18, Cys37, and Cys40.

The protein belongs to the bacterial ribosomal protein bL31 family. Type A subfamily. In terms of assembly, part of the 50S ribosomal subunit. Zn(2+) is required as a cofactor.

Binds the 23S rRNA. In Saccharophagus degradans (strain 2-40 / ATCC 43961 / DSM 17024), this protein is Large ribosomal subunit protein bL31.